Consider the following 145-residue polypeptide: Mannitol-specific phosphotransferase enzyme IIA component (145 aa).

Residues 2-145 (ENLTNISIEL…EEITENLAIA (144 aa)) form the PTS EIIA type-2 domain. Catalysis depends on His62, which acts as the Tele-phosphohistidine intermediate. His62 bears the Phosphohistidine; by HPr mark.

The protein localises to the cytoplasm. In terms of biological role, the phosphoenolpyruvate-dependent sugar phosphotransferase system (sugar PTS), a major carbohydrate active transport system, catalyzes the phosphorylation of incoming sugar substrates concomitantly with their translocation across the cell membrane. The enzyme II CmtAB PTS system is involved in D-mannitol transport. The polypeptide is Mannitol-specific phosphotransferase enzyme IIA component (Enterococcus faecalis (strain ATCC 700802 / V583)).